Here is a 245-residue protein sequence, read N- to C-terminus: Putative protein phosphatase 2C-like protein 45 (245 aa).

The PPM-type phosphatase domain occupies 1–188; that stretch reads MEDRFSTITN…DDISVMLIPL (188 aa).

This sequence belongs to the PP2C family.

The chain is Putative protein phosphatase 2C-like protein 45 from Arabidopsis thaliana (Mouse-ear cress).